Here is a 226-residue protein sequence, read N- to C-terminus: PKHD-type hydroxylase PputW619_4316 (226 aa).

The region spanning 78–178 (KVFPPLINCY…RYAAFFWTQS (101 aa)) is the Fe2OG dioxygenase domain. The Fe cation site is built by His96, Asp98, and His159. Arg169 provides a ligand contact to 2-oxoglutarate.

The cofactor is Fe(2+). L-ascorbate is required as a cofactor.

This is PKHD-type hydroxylase PputW619_4316 from Pseudomonas putida (strain W619).